The following is a 45-amino-acid chain: Large ribosomal subunit protein bL36 (45 aa).

The interval 26-45 (VINKKDPNRKQRQKGPARKK) is disordered. A compositionally biased stretch (basic residues) spans 35 to 45 (KQRQKGPARKK).

Belongs to the bacterial ribosomal protein bL36 family.

This chain is Large ribosomal subunit protein bL36, found in Protochlamydia amoebophila (strain UWE25).